The chain runs to 417 residues: UDP-N-acetylglucosamine 1-carboxyvinyltransferase (417 aa).

22 to 23 (KN) contributes to the phosphoenolpyruvate binding site. Residue Arg-92 participates in UDP-N-acetyl-alpha-D-glucosamine binding. The active-site Proton donor is Cys-116. Cys-116 carries the 2-(S-cysteinyl)pyruvic acid O-phosphothioketal modification. UDP-N-acetyl-alpha-D-glucosamine contacts are provided by Asp-304 and Ile-326.

Belongs to the EPSP synthase family. MurA subfamily.

The protein resides in the cytoplasm. The catalysed reaction is phosphoenolpyruvate + UDP-N-acetyl-alpha-D-glucosamine = UDP-N-acetyl-3-O-(1-carboxyvinyl)-alpha-D-glucosamine + phosphate. The protein operates within cell wall biogenesis; peptidoglycan biosynthesis. Cell wall formation. Adds enolpyruvyl to UDP-N-acetylglucosamine. This Geotalea daltonii (strain DSM 22248 / JCM 15807 / FRC-32) (Geobacter daltonii) protein is UDP-N-acetylglucosamine 1-carboxyvinyltransferase.